The sequence spans 293 residues: Energy-coupling factor transporter ATP-binding protein EcfA2 (293 aa).

An ABC transporter domain is found at 3 to 246 (ITFQKVEHRY…ADELEKIGVD (244 aa)). 40–47 (GHTGSGKS) contributes to the ATP binding site.

This sequence belongs to the ABC transporter superfamily. Energy-coupling factor EcfA family. As to quaternary structure, forms a stable energy-coupling factor (ECF) transporter complex composed of 2 membrane-embedded substrate-binding proteins (S component), 2 ATP-binding proteins (A component) and 2 transmembrane proteins (T component).

The protein localises to the cell membrane. In terms of biological role, ATP-binding (A) component of a common energy-coupling factor (ECF) ABC-transporter complex. Unlike classic ABC transporters this ECF transporter provides the energy necessary to transport a number of different substrates. In Bacillus cereus (strain ATCC 14579 / DSM 31 / CCUG 7414 / JCM 2152 / NBRC 15305 / NCIMB 9373 / NCTC 2599 / NRRL B-3711), this protein is Energy-coupling factor transporter ATP-binding protein EcfA2.